The sequence spans 89 residues: Small ribosomal subunit protein uS15 (89 aa).

The protein belongs to the universal ribosomal protein uS15 family. As to quaternary structure, part of the 30S ribosomal subunit. Forms a bridge to the 50S subunit in the 70S ribosome, contacting the 23S rRNA.

In terms of biological role, one of the primary rRNA binding proteins, it binds directly to 16S rRNA where it helps nucleate assembly of the platform of the 30S subunit by binding and bridging several RNA helices of the 16S rRNA. Its function is as follows. Forms an intersubunit bridge (bridge B4) with the 23S rRNA of the 50S subunit in the ribosome. In Staphylococcus carnosus (strain TM300), this protein is Small ribosomal subunit protein uS15.